The primary structure comprises 445 residues: DNA primase DnaG (445 aa).

The 87-residue stretch at Asp-166–Val-252 folds into the Toprim domain. Residues Glu-172, Asp-214, and Asp-216 each coordinate Mg(2+). A disordered region spans residues Glu-276–Leu-355. The span at Ser-284–Asp-298 shows a compositional bias: low complexity. Positions Asn-303 to Ser-313 are enriched in polar residues. The span at Ser-324 to Ala-337 shows a compositional bias: low complexity.

It belongs to the archaeal DnaG primase family. Forms a ternary complex with MCM helicase and DNA. The cofactor is Mg(2+).

The catalysed reaction is ssDNA + n NTP = ssDNA/pppN(pN)n-1 hybrid + (n-1) diphosphate.. Its function is as follows. RNA polymerase that catalyzes the synthesis of short RNA molecules used as primers for DNA polymerase during DNA replication. The sequence is that of DNA primase DnaG from Haloarcula marismortui (strain ATCC 43049 / DSM 3752 / JCM 8966 / VKM B-1809) (Halobacterium marismortui).